The chain runs to 188 residues: Elongation factor P (188 aa).

Belongs to the elongation factor P family.

The protein resides in the cytoplasm. The protein operates within protein biosynthesis; polypeptide chain elongation. In terms of biological role, involved in peptide bond synthesis. Stimulates efficient translation and peptide-bond synthesis on native or reconstituted 70S ribosomes in vitro. Probably functions indirectly by altering the affinity of the ribosome for aminoacyl-tRNA, thus increasing their reactivity as acceptors for peptidyl transferase. The chain is Elongation factor P from Ureaplasma urealyticum serovar 10 (strain ATCC 33699 / Western).